The sequence spans 160 residues: Transcription elongation factor GreA (160 aa).

Residues 50–70 are a coiled coil; it reads AAREQQSFNEGRIQELEAKLS.

Belongs to the GreA/GreB family.

Necessary for efficient RNA polymerase transcription elongation past template-encoded arresting sites. The arresting sites in DNA have the property of trapping a certain fraction of elongating RNA polymerases that pass through, resulting in locked ternary complexes. Cleavage of the nascent transcript by cleavage factors such as GreA or GreB allows the resumption of elongation from the new 3'terminus. GreA releases sequences of 2 to 3 nucleotides. In Legionella pneumophila (strain Paris), this protein is Transcription elongation factor GreA.